Here is a 364-residue protein sequence, read N- to C-terminus: tRNA 2-selenouridine synthase (364 aa).

The Rhodanese domain occupies 14 to 137 (LIADTPIIDV…LRQTAIQATI (124 aa)). Cys-97 acts as the S-selanylcysteine intermediate in catalysis.

Belongs to the SelU family. In terms of assembly, monomer.

It carries out the reaction 5-methylaminomethyl-2-thiouridine(34) in tRNA + selenophosphate + (2E)-geranyl diphosphate + H2O + H(+) = 5-methylaminomethyl-2-selenouridine(34) in tRNA + (2E)-thiogeraniol + phosphate + diphosphate. The catalysed reaction is 5-methylaminomethyl-2-thiouridine(34) in tRNA + (2E)-geranyl diphosphate = 5-methylaminomethyl-S-(2E)-geranyl-thiouridine(34) in tRNA + diphosphate. It catalyses the reaction 5-methylaminomethyl-S-(2E)-geranyl-thiouridine(34) in tRNA + selenophosphate + H(+) = 5-methylaminomethyl-2-(Se-phospho)selenouridine(34) in tRNA + (2E)-thiogeraniol. The enzyme catalyses 5-methylaminomethyl-2-(Se-phospho)selenouridine(34) in tRNA + H2O = 5-methylaminomethyl-2-selenouridine(34) in tRNA + phosphate. Involved in the post-transcriptional modification of the uridine at the wobble position (U34) of tRNA(Lys), tRNA(Glu) and tRNA(Gln). Catalyzes the conversion of 2-thiouridine (S2U-RNA) to 2-selenouridine (Se2U-RNA). Acts in a two-step process involving geranylation of 2-thiouridine (S2U) to S-geranyl-2-thiouridine (geS2U) and subsequent selenation of the latter derivative to 2-selenouridine (Se2U) in the tRNA chain. The chain is tRNA 2-selenouridine synthase from Escherichia coli (strain K12 / MC4100 / BW2952).